The following is a 158-amino-acid chain: Low molecular weight phosphotyrosine protein phosphatase (158 aa).

At Ala2 the chain carries N-acetylalanine. Residue Cys13 is the Nucleophile of the active site. Arg19 is an active-site residue. The active-site Proton donor is Asp130. Phosphotyrosine is present on residues Tyr132 and Tyr133.

It belongs to the low molecular weight phosphotyrosine protein phosphatase family.

Its subcellular location is the cytoplasm. The catalysed reaction is O-phospho-L-tyrosyl-[protein] + H2O = L-tyrosyl-[protein] + phosphate. The enzyme catalyses a phosphate monoester + H2O = an alcohol + phosphate. Acts on tyrosine phosphorylated proteins, low-MW aryl phosphates and natural and synthetic acyl phosphates. This is Low molecular weight phosphotyrosine protein phosphatase (ACP1) from Gallus gallus (Chicken).